The chain runs to 232 residues: Small ribosomal subunit protein uS3 (232 aa).

The KH type-2 domain maps to 39–107 (VRQYLTKELK…PAQINIAEVR (69 aa)).

The protein belongs to the universal ribosomal protein uS3 family. In terms of assembly, part of the 30S ribosomal subunit. Forms a tight complex with proteins S10 and S14.

Its function is as follows. Binds the lower part of the 30S subunit head. Binds mRNA in the 70S ribosome, positioning it for translation. The protein is Small ribosomal subunit protein uS3 of Aliivibrio fischeri (strain MJ11) (Vibrio fischeri).